We begin with the raw amino-acid sequence, 74 residues long: MKLTCVVIVAVLLLTACQLIIAEDSRGTQLHRALRKATKLSVSTRTCVMFGSMCDKEEHSICCYECDYKKGICV.

An N-terminal signal peptide occupies residues 1-22; sequence MKLTCVVIVAVLLLTACQLIIA. The propeptide occupies 23–45; it reads EDSRGTQLHRALRKATKLSVSTR. 3 disulfide bridges follow: Cys-47/Cys-63, Cys-54/Cys-66, and Cys-62/Cys-73.

This sequence belongs to the conotoxin O1 superfamily. As to expression, expressed by the venom duct.

It is found in the secreted. The chain is Conotoxin Bu4 from Conus bullatus (Bubble cone).